Reading from the N-terminus, the 128-residue chain is Large ribosomal subunit protein bL20c (128 aa).

This sequence belongs to the bacterial ribosomal protein bL20 family. As to quaternary structure, component of the chloroplast large ribosomal subunit (LSU). Mature 70S chloroplast ribosomes of higher plants consist of a small (30S) and a large (50S) subunit. The 30S small subunit contains 1 molecule of ribosomal RNA (16S rRNA) and 24 different proteins. The 50S large subunit contains 3 rRNA molecules (23S, 5S and 4.5S rRNA) and 33 different proteins.

It localises to the plastid. It is found in the chloroplast. Functionally, component of the chloroplast ribosome (chloro-ribosome), a dedicated translation machinery responsible for the synthesis of chloroplast genome-encoded proteins, including proteins of the transcription and translation machinery and components of the photosynthetic apparatus. This chain is Large ribosomal subunit protein bL20c (rpl20), found in Spinacia oleracea (Spinach).